The primary structure comprises 129 residues: Sulfurtransferase TusD (129 aa).

Cysteine 79 (cysteine persulfide intermediate) is an active-site residue.

Belongs to the DsrE/TusD family. As to quaternary structure, heterohexamer, formed by a dimer of trimers. The hexameric TusBCD complex contains 2 copies each of TusB, TusC and TusD. The TusBCD complex interacts with TusE.

It is found in the cytoplasm. Part of a sulfur-relay system required for 2-thiolation of 5-methylaminomethyl-2-thiouridine (mnm(5)s(2)U) at tRNA wobble positions. Accepts sulfur from TusA and transfers it in turn to TusE. The polypeptide is Sulfurtransferase TusD (Pectobacterium atrosepticum (strain SCRI 1043 / ATCC BAA-672) (Erwinia carotovora subsp. atroseptica)).